Here is a 210-residue protein sequence, read N- to C-terminus: Na(+)-translocating NADH-quinone reductase subunit D (210 aa).

The next 6 helical transmembrane spans lie at 14 to 34, 42 to 62, 72 to 92, 103 to 123, 131 to 151, and 178 to 198; these read PIVN…ALAV, LVMA…ISMI, IIVQ…LLQA, VFVG…AYAM, FMDG…VGFV, and NGLL…IWII.

This sequence belongs to the NqrDE/RnfAE family. Composed of six subunits; NqrA, NqrB, NqrC, NqrD, NqrE and NqrF.

The protein localises to the cell inner membrane. The catalysed reaction is a ubiquinone + n Na(+)(in) + NADH + H(+) = a ubiquinol + n Na(+)(out) + NAD(+). Functionally, NQR complex catalyzes the reduction of ubiquinone-1 to ubiquinol by two successive reactions, coupled with the transport of Na(+) ions from the cytoplasm to the periplasm. NqrA to NqrE are probably involved in the second step, the conversion of ubisemiquinone to ubiquinol. This is Na(+)-translocating NADH-quinone reductase subunit D from Shewanella oneidensis (strain ATCC 700550 / JCM 31522 / CIP 106686 / LMG 19005 / NCIMB 14063 / MR-1).